The primary structure comprises 349 residues: MKPVALVTTKPGFEPQLREELNKLPIKKKILWTPFRGILKVLSQNPYEFLNIIKENKNNLKFSLRIIPLEIGCQTDINEIKKAISFLINKKKEKLKNKSFVVRCNRRGNHEFTSEELERIIGEYVLENFKDLNLRVNLKDWDFKINIEILQDESYISIFQDEFNELVIEENIKNLKNLKRYIERPLNRSERKMQELMEKFPFIFENINCVVDIGSSPGGWAKMLSKKAKKVYAIDTGELKIKANNIIHIKKRAENVDFEKDINEEIDLITNDTNLYPDESLFLTLKFAKHLKTNGYIIHTLKARNLKTKKEDLEKVLKILSYYRNIKIFKIINLRANTKNELTLILKKV.

In terms of domain architecture, THUMP spans 51-160 (NIIKENKNNL…QDESYISIFQ (110 aa)).

This is an uncharacterized protein from Methanocaldococcus jannaschii (strain ATCC 43067 / DSM 2661 / JAL-1 / JCM 10045 / NBRC 100440) (Methanococcus jannaschii).